The primary structure comprises 649 residues: Replication protein E1 (649 aa).

The Nuclear localization signal motif lies at Lys-83–Lys-85. Residues Ser-89, Ser-93, and Ser-107 each carry the phosphoserine; by host modification. A Nuclear export signal motif is present at residues Ile-106–Leu-115. A disordered region spans residues Gly-138–Arg-169. The DNA-binding region stretch occupies residues Arg-187–Asp-353. Positions Ile-452–Val-602 constitute an SF3 helicase domain. An ATP-binding site is contributed by Gly-478 to Ser-485. Residue Lys-559 forms a Glycyl lysine isopeptide (Lys-Gly) (interchain with G-Cter in SUMO) linkage.

The protein belongs to the papillomaviridae E1 protein family. As to quaternary structure, can form hexamers. Interacts with E2 protein; this interaction increases E1 DNA binding specificity. Interacts with host DNA polymerase subunit POLA2. Interacts with host single stranded DNA-binding protein RPA1. Interacts with host TOP1; this interaction stimulates the enzymatic activity of TOP1. In terms of processing, phosphorylated. Sumoylated.

Its subcellular location is the host nucleus. The enzyme catalyses Couples ATP hydrolysis with the unwinding of duplex DNA by translocating in the 3'-5' direction.. It carries out the reaction ATP + H2O = ADP + phosphate + H(+). Functionally, ATP-dependent DNA 3'-5' helicase required for initiation of viral DNA replication. It forms a complex with the viral E2 protein. The E1-E2 complex binds to the replication origin which contains binding sites for both proteins. During the initial step, a dimer of E1 interacts with a dimer of protein E2 leading to a complex that binds the viral origin of replication with high specificity. Then, a second dimer of E1 displaces the E2 dimer in an ATP-dependent manner to form the E1 tetramer. Following this, two E1 monomers are added to each half of the site, which results in the formation of two E1 trimers on the viral ori. Subsequently, two hexamers will be created. The double hexamer acts as a bi-directional helicase machinery and unwinds the viral DNA and then recruits the host DNA polymerase to start replication. This is Replication protein E1 from Homo sapiens (Human).